The sequence spans 323 residues: Acetyl-coenzyme A carboxylase carboxyl transferase subunit alpha (323 aa).

The 255-residue stretch at 39-293 (RLAGKSQQLT…KRSLAESLRQ (255 aa)) folds into the CoA carboxyltransferase C-terminal domain.

This sequence belongs to the AccA family. As to quaternary structure, acetyl-CoA carboxylase is a heterohexamer composed of biotin carboxyl carrier protein (AccB), biotin carboxylase (AccC) and two subunits each of ACCase subunit alpha (AccA) and ACCase subunit beta (AccD).

The protein localises to the cytoplasm. It catalyses the reaction N(6)-carboxybiotinyl-L-lysyl-[protein] + acetyl-CoA = N(6)-biotinyl-L-lysyl-[protein] + malonyl-CoA. Its pathway is lipid metabolism; malonyl-CoA biosynthesis; malonyl-CoA from acetyl-CoA: step 1/1. In terms of biological role, component of the acetyl coenzyme A carboxylase (ACC) complex. First, biotin carboxylase catalyzes the carboxylation of biotin on its carrier protein (BCCP) and then the CO(2) group is transferred by the carboxyltransferase to acetyl-CoA to form malonyl-CoA. This is Acetyl-coenzyme A carboxylase carboxyl transferase subunit alpha from Cupriavidus pinatubonensis (strain JMP 134 / LMG 1197) (Cupriavidus necator (strain JMP 134)).